Consider the following 115-residue polypeptide: Small polypeptide DEVIL 13 (115 aa).

Basic and acidic residues predominate over residues 1 to 12 (MEEKWKLSKKDT). Positions 1 to 89 (MEEKWKLSKK…SITQKYSSLA (89 aa)) are disordered. The segment covering 13-65 (TASSSSSKSKFSRSFSTSASSTKSPIFVRSSSTKCSVPSSSSSSSSSSSISRS) has biased composition (low complexity). Residues 44 to 63 (STKCSVPSSSSSSSSSSSIS) traverse the membrane as a helical segment. The interval 80–111 (SITQKYSSLAKEQKARFYIMRRCVAMLVCWHK) is required for DVL/RTFL small polypeptide activity.

Belongs to the DVL/RTFL small polypeptides family.

The protein resides in the cell membrane. Functionally, small polypeptide acting as a regulatory molecule which coordinates cellular responses required for differentiation, growth and development, probably by restricting polar cell proliferation in lateral organs and coordinating socket cell recruitment and differentiation at trichome sites. The polypeptide is Small polypeptide DEVIL 13 (Arabidopsis thaliana (Mouse-ear cress)).